Here is a 149-residue protein sequence, read N- to C-terminus: Transcriptional regulator MraZ (149 aa).

SpoVT-AbrB domains are found at residues 7–54 (KYVN…GISH) and 83–126 (AVQL…QPQN).

The protein belongs to the MraZ family. Forms oligomers.

The protein localises to the cytoplasm. The protein resides in the nucleoid. The chain is Transcriptional regulator MraZ from Rickettsia felis (strain ATCC VR-1525 / URRWXCal2) (Rickettsia azadi).